The chain runs to 97 residues: Large ribosomal subunit protein eL21 (97 aa).

Belongs to the eukaryotic ribosomal protein eL21 family.

This is Large ribosomal subunit protein eL21 from Methanococcus vannielii (strain ATCC 35089 / DSM 1224 / JCM 13029 / OCM 148 / SB).